Here is a 178-residue protein sequence, read N- to C-terminus: Single-stranded DNA-binding protein 2 (178 aa).

One can recognise an SSB domain in the interval 6-111 (VNKVILVGNL…VVVSQSGTMQ (106 aa)). A DNA-binding region spans residues 55-61 (WHRVVLY). The interval 111–161 (QMLGGRNSAGSGQQQGGWGQPQQPAAPSHSGMPPQQHPANEPPMDFDDDIP) is disordered.

In terms of assembly, homotetramer.

This chain is Single-stranded DNA-binding protein 2 (ssb2), found in Salmonella typhi.